Reading from the N-terminus, the 511-residue chain is 2'-acyl-2-O-sulfo-trehalose (hydroxy)phthioceranyltransferase PapA1 (511 aa).

The protein belongs to the PapA acyltransferase family.

The enzyme catalyses a (hydroxy)phthioceranyl-[(hydroxy)phthioceranic acid synthase] + 2'-palmitoyl/stearoyl-2-O-sulfo-alpha,alpha-trehalose = a 3'-(hydroxy)phthioceranyl-2'-palmitoyl/stearoyl-2-O-sulfo-alpha,alpha-trehalose + holo-[(hydroxy)phthioceranic acid synthase].. Required for the biosynthesis of sulfolipid-1 (SL-1), a major mycobacterial cell wall lipid. Catalyzes the acylation of trehalose-2-sulfate-2'-palmitate (SL659) by adding the (hydroxy)phthioceranoyl group at the 3'-position to yield the diacylated intermediate 2-palmitoyl-3-(C43)-phthioceranyl-alpha, alpha'-D-trehalose-2'-sulfate (SL1278). The protein is 2'-acyl-2-O-sulfo-trehalose (hydroxy)phthioceranyltransferase PapA1 (papA1) of Mycobacterium tuberculosis (strain CDC 1551 / Oshkosh).